The chain runs to 419 residues: tRNA(Ile)-lysidine synthase (419 aa).

31–36 (SGGGDS) is a binding site for ATP.

Belongs to the tRNA(Ile)-lysidine synthase family.

The protein localises to the cytoplasm. The enzyme catalyses cytidine(34) in tRNA(Ile2) + L-lysine + ATP = lysidine(34) in tRNA(Ile2) + AMP + diphosphate + H(+). Ligates lysine onto the cytidine present at position 34 of the AUA codon-specific tRNA(Ile) that contains the anticodon CAU, in an ATP-dependent manner. Cytidine is converted to lysidine, thus changing the amino acid specificity of the tRNA from methionine to isoleucine. This Ruegeria pomeroyi (strain ATCC 700808 / DSM 15171 / DSS-3) (Silicibacter pomeroyi) protein is tRNA(Ile)-lysidine synthase.